The primary structure comprises 162 residues: 3-isopropylmalate dehydratase small subunit (162 aa).

Belongs to the LeuD family. LeuD type 2 subfamily. As to quaternary structure, heterodimer of LeuC and LeuD.

It catalyses the reaction (2R,3S)-3-isopropylmalate = (2S)-2-isopropylmalate. Its pathway is amino-acid biosynthesis; L-leucine biosynthesis; L-leucine from 3-methyl-2-oxobutanoate: step 2/4. In terms of biological role, catalyzes the isomerization between 2-isopropylmalate and 3-isopropylmalate, via the formation of 2-isopropylmaleate. In Methanothermobacter thermautotrophicus (strain ATCC 29096 / DSM 1053 / JCM 10044 / NBRC 100330 / Delta H) (Methanobacterium thermoautotrophicum), this protein is 3-isopropylmalate dehydratase small subunit (leuD).